The primary structure comprises 504 residues: Maturase K (504 aa).

Belongs to the intron maturase 2 family. MatK subfamily.

It localises to the plastid. The protein localises to the chloroplast. Functionally, usually encoded in the trnK tRNA gene intron. Probably assists in splicing its own and other chloroplast group II introns. The polypeptide is Maturase K (Simmondsia chinensis (Jojoba)).